The primary structure comprises 409 residues: Arginine biosynthesis bifunctional protein ArgJ (409 aa).

Substrate-binding residues include Thr156, Lys182, Thr193, Glu280, Asn404, and Ser409. The active-site Nucleophile is the Thr193.

The protein belongs to the ArgJ family. In terms of assembly, heterotetramer of two alpha and two beta chains.

It is found in the cytoplasm. The enzyme catalyses N(2)-acetyl-L-ornithine + L-glutamate = N-acetyl-L-glutamate + L-ornithine. It catalyses the reaction L-glutamate + acetyl-CoA = N-acetyl-L-glutamate + CoA + H(+). The protein operates within amino-acid biosynthesis; L-arginine biosynthesis; L-ornithine and N-acetyl-L-glutamate from L-glutamate and N(2)-acetyl-L-ornithine (cyclic): step 1/1. It functions in the pathway amino-acid biosynthesis; L-arginine biosynthesis; N(2)-acetyl-L-ornithine from L-glutamate: step 1/4. Its function is as follows. Catalyzes two activities which are involved in the cyclic version of arginine biosynthesis: the synthesis of N-acetylglutamate from glutamate and acetyl-CoA as the acetyl donor, and of ornithine by transacetylation between N(2)-acetylornithine and glutamate. The protein is Arginine biosynthesis bifunctional protein ArgJ of Ralstonia nicotianae (strain ATCC BAA-1114 / GMI1000) (Ralstonia solanacearum).